The chain runs to 3424 residues: Genome polyprotein (3424 aa).

Residues 2-15 (SKKPGKSAAKRTVN) form an interaction with host EXOC1 region. At 2–101 (SKKPGKSAAK…SVNKRKEKKK (100 aa)) the chain is on the cytoplasmic side. The interval 35–70 (MLDVRGAPRLILALMAFFRFAAIKPTLGLKKRWRSV) is hydrophobic; homodimerization of capsid protein C. A propeptide spans 102 to 118 (SFSTALLWITMITAVAG) (ER anchor for the capsid protein C, removed in mature form by serine protease NS3). A helical transmembrane segment spans residues 102 to 122 (SFSTALLWITMITAVAGLKIS). Topologically, residues 123-244 (SHRDRPLLMV…TTKYLTKVEN (122 aa)) are extracellular. Asparagine 133 is a glycosylation site (N-linked (GlcNAc...) asparagine; by host). Residues 245 to 265 (WVIRNPGYALVALATAWMLGS) traverse the membrane as a helical segment. The Cytoplasmic segment spans residues 266-270 (NTPQR). The chain crosses the membrane as a helical span at residues 271–285 (VVFMIMMMLIAPAYS). At 286-738 (LNCLGISNRD…GVFGTAFRSL (453 aa)) the chain is on the extracellular side. 8 disulfides stabilise this stretch: cysteine 288-cysteine 315, cysteine 345-cysteine 401, cysteine 345-cysteine 406, cysteine 359-cysteine 390, cysteine 377-cysteine 401, cysteine 377-cysteine 406, cysteine 475-cysteine 573, and cysteine 590-cysteine 621. The segment at 383-396 (DRGWGNGCGLFGKG) is fusion peptide. Residues 739 to 759 (FGGMSWVTQALMGALLLWLGI) traverse the membrane as a helical segment. Residues 760-765 (SARERT) lie on the Cytoplasmic side of the membrane. The helical transmembrane segment at 766-786 (VSLIMLSVGGILLFLAVNVHA) threads the bilayer. At 787-1170 (DTGCAIDMAR…EVLRRRWTAN (384 aa)) the chain is on the extracellular side. 8 cysteine pairs are disulfide-bonded: cysteine 790–cysteine 801, cysteine 841–cysteine 929, cysteine 965–cysteine 1009, cysteine 1067–cysteine 1116, cysteine 1078–cysteine 1099, cysteine 1078–cysteine 1100, cysteine 1099–cysteine 1103, and cysteine 1100–cysteine 1103. N-linked (GlcNAc...) asparagine; by host glycosylation is found at asparagine 916 and asparagine 993. The chain crosses the membrane as a helical span at residues 1171–1191 (LALPTSALLMACFIFGGFTYL). The Cytoplasmic segment spans residues 1192-1213 (DLFRYFILVGAAFAEANSGGDV). A helical transmembrane segment spans residues 1214–1234 (VHLAMIAAFNIQPVALVTTFF). The Lumenal segment spans residues 1235–1276 (RKNWTNRENMILIIAAACTQMACMELKIELFHVMNSLSLAWM). The chain crosses the membrane as a helical span at residues 1277–1297 (ILKALTTGTTSTLAMPFLAAL). Over 1298-1302 (SPPMN) the chain is Cytoplasmic. Residues 1303–1323 (WLGLDVVRCLLIMAGVAALIS) traverse the membrane as a helical segment. Residues 1324–1333 (ERRESLAKKK) are Lumenal-facing. A helical membrane pass occupies residues 1334–1354 (GALLISAALALTGAFSPLVLQ). The Cytoplasmic segment spans residues 1355 to 1367 (GALMFTQSLGKRG). The chain crosses the membrane as a helical span at residues 1368–1388 (WPASEVLTAVGMTFALAGSVA). The Lumenal segment spans residues 1389 to 1391 (RLD). The helical transmembrane segment at 1392–1412 (GGTMAIPLATMAILAVAYVLS) threads the bilayer. Over 1413-1469 (GKSTDMWLERCADISWINEAEITGTSPRLDVELDSNGDFKMINDPGVPMWMWTCRMG) the chain is Cytoplasmic. Positions 1420–1459 (LERCADISWINEAEITGTSPRLDVELDSNGDFKMINDPGV) are interacts with and activates NS3 protease. Residues 1470–1490 (LMAMAAYNPVLIPVSMAGYWM) constitute an intramembrane region (helical). The Cytoplasmic portion of the chain corresponds to 1491 to 2167 (TVKIHKRGGV…ALEELPDTVE (677 aa)). The Peptidase S7 domain occupies 1498 to 1675 (GGVMWDVPAP…ERQEEETPEA (178 aa)). Active-site charge relay system; for serine protease NS3 activity residues include histidine 1548, aspartate 1572, and serine 1632. Positions 1678–1834 (PDMLKKRRLT…DSNAPIIDQE (157 aa)) constitute a Helicase ATP-binding domain. Residues 1682–1685 (KKRR) form an important for RNA-binding region. Residue 1691 to 1698 (LHPGAGKT) coordinates ATP. Residues 1782–1785 (DEAH) carry the DEAH box motif. The region spanning 1845–2009 (GFEWITEYTG…GLVAQLYGPE (165 aa)) is the Helicase C-terminal domain. Residue lysine 1886 is modified to N6-acetyllysine; by host. Residues 1944 to 1969 (APITPASAAQRRGRIGRDPTQSGDEY) are disordered. Positions 2160 to 2164 (EELPD) are regulates the ATPase activity of NS3 helicase. The helical transmembrane segment at 2168 to 2188 (TILLMTMMCVASLGMFTLMVH) threads the bilayer. The Lumenal portion of the chain corresponds to 2189 to 2190 (RR). An intramembrane region (helical) is located at residues 2191 to 2211 (GLGKTGLGTLVLATVTVLLWI). The Lumenal portion of the chain corresponds to 2212–2213 (SD). The helical transmembrane segment at 2214–2234 (VPAPKIAGVLLIAFLLMIVLI) threads the bilayer. The Cytoplasmic portion of the chain corresponds to 2235–2249 (PEPEKQRSQTDNHLA). Residues 2250 to 2264 (IFLVCVLLLIGAVSA) form a helical membrane-spanning segment. At 2265–2299 (NEMGWLETTKKDIGKLFRSSGDTQEQSTWQSWAPE) the chain is on the lumenal side. The helical intramembrane region spans 2300–2320 (VRAATAWAGYAGLTVFLTPLF). Residues 2321-2342 (RHLITTQYVSFSLTAITAQASA) are Lumenal-facing. A helical membrane pass occupies residues 2343-2363 (LFGLSAGYPFVGIDLAVGFLL). Residues 2364 to 2371 (LGCYGQYN) lie on the Cytoplasmic side of the membrane. The helical transmembrane segment at 2372-2392 (LPTAVATGLLLLAHYGYMIPG) threads the bilayer. Topologically, residues 2393-2439 (WQAEAMRAAQKRTAAGVMKNAVVDGIVATDIPEVDTATPITEKKLGQ) are lumenal. A helical membrane pass occupies residues 2440-2460 (ILLILLCGASLLVKFDTMVLV). The Cytoplasmic segment spans residues 2461 to 3424 (EAGVLTTSAM…PSPVLFTGAI (964 aa)). In terms of domain architecture, mRNA cap 0-1 NS5-type MT spans 2520–2784 (GGGSAPTLGE…DVCLGSGTRA (265 aa)). S-adenosyl-L-methionine is bound at residue serine 2575. Serine 2575 is subject to Phosphoserine. Lysine 2580 (for 2'-O-MTase activity) is an active-site residue. S-adenosyl-L-methionine is bound by residues glycine 2605, tryptophan 2606, threonine 2623, lysine 2624, aspartate 2650, and valine 2651. Catalysis depends on aspartate 2665, which acts as the For 2'-O-MTase activity. Residue isoleucine 2666 coordinates S-adenosyl-L-methionine. Catalysis depends on for 2'-O-MTase activity residues lysine 2700 and glutamate 2736. Tyrosine 2738 provides a ligand contact to S-adenosyl-L-methionine. 4 residues coordinate Zn(2+): glutamate 2958, histidine 2962, cysteine 2967, and cysteine 2970. Residues 3048-3200 (GNMFADDTAG…KPIDDRFASA (153 aa)) form the RdRp catalytic domain. Residues histidine 3235, cysteine 3251, and cysteine 3370 each contribute to the Zn(2+) site.

This sequence in the N-terminal section; belongs to the class I-like SAM-binding methyltransferase superfamily. mRNA cap 0-1 NS5-type methyltransferase family. In terms of assembly, homodimer. Interacts (via N-terminus) with host EXOC1 (via C-terminus); this interaction results in EXOC1 degradation through the proteasome degradation pathway. As to quaternary structure, forms heterodimers with envelope protein E in the endoplasmic reticulum and Golgi. Homodimer; in the endoplasmic reticulum and Golgi. Interacts with protein prM. Interacts with non-structural protein 1. In terms of assembly, homodimer; Homohexamer when secreted. Interacts with envelope protein E. NS1 interacts with NS4B. Interacts with host complement protein CFH; this interaction leads to the degradation of C3. As to quaternary structure, interacts (via N-terminus) with serine protease NS3. Forms a heterodimer with serine protease NS3. May form homooligomers. In terms of assembly, forms a heterodimer with NS2B. Interacts with non-structural protein 2A (via N-terminus). Interacts with NS4B. Interacts with unphosphorylated RNA-directed RNA polymerase NS5; this interaction stimulates RNA-directed RNA polymerase NS5 guanylyltransferase activity. As to quaternary structure, interacts with serine protease NS3. Homodimer. Interacts with host STAT2; this interaction inhibits the phosphorylation of the latter, and, when all viral proteins are present (polyprotein), targets STAT2 for degradation. Interacts with serine protease NS3. Post-translationally, specific enzymatic cleavages in vivo yield mature proteins. Cleavages in the lumen of endoplasmic reticulum are performed by host signal peptidase, whereas cleavages in the cytoplasmic side are performed by serine protease NS3. Signal cleavage at the 2K-4B site requires a prior NS3 protease-mediated cleavage at the 4A-2K site. In terms of processing, cleaved in post-Golgi vesicles by a host furin, releasing the mature small envelope protein M, and peptide pr. This cleavage is incomplete as up to 30% of viral particles still carry uncleaved prM. N-glycosylated. Post-translationally, N-glycosylated. The excreted form is glycosylated and this is required for efficient secretion of the protein from infected cells. In terms of processing, acetylated by host KAT5. Acetylation modulates NS3 RNA-binding and unwinding activities and plays an important positive role for viral replication. Phosphorylated on serines residues. This phosphorylation may trigger NS5 nuclear localization.

Its subcellular location is the virion. The protein localises to the host nucleus. It is found in the host cytoplasm. The protein resides in the host perinuclear region. It localises to the secreted. Its subcellular location is the virion membrane. The protein localises to the host endoplasmic reticulum membrane. It carries out the reaction Selective hydrolysis of -Xaa-Xaa-|-Yaa- bonds in which each of the Xaa can be either Arg or Lys and Yaa can be either Ser or Ala.. The enzyme catalyses RNA(n) + a ribonucleoside 5'-triphosphate = RNA(n+1) + diphosphate. The catalysed reaction is a ribonucleoside 5'-triphosphate + H2O = a ribonucleoside 5'-diphosphate + phosphate + H(+). It catalyses the reaction ATP + H2O = ADP + phosphate + H(+). It carries out the reaction a 5'-end (5'-triphosphoguanosine)-ribonucleoside in mRNA + S-adenosyl-L-methionine = a 5'-end (N(7)-methyl 5'-triphosphoguanosine)-ribonucleoside in mRNA + S-adenosyl-L-homocysteine. The enzyme catalyses a 5'-end (N(7)-methyl 5'-triphosphoguanosine)-ribonucleoside in mRNA + S-adenosyl-L-methionine = a 5'-end (N(7)-methyl 5'-triphosphoguanosine)-(2'-O-methyl-ribonucleoside) in mRNA + S-adenosyl-L-homocysteine + H(+). In terms of biological role, plays a role in virus budding by binding to the cell membrane and gathering the viral RNA into a nucleocapsid that forms the core of a mature virus particle. During virus entry, may induce genome penetration into the host cytoplasm after hemifusion induced by the surface proteins. Can migrate to the cell nucleus where it modulates host functions. Overcomes the anti-viral effects of host EXOC1 by sequestering and degrading the latter through the proteasome degradation pathway. Inhibits RNA silencing by interfering with host Dicer. Its function is as follows. Prevents premature fusion activity of envelope proteins in trans-Golgi by binding to envelope protein E at pH6.0. After virion release in extracellular space, gets dissociated from E dimers. Functionally, acts as a chaperone for envelope protein E during intracellular virion assembly by masking and inactivating envelope protein E fusion peptide. prM is the only viral peptide matured by host furin in the trans-Golgi network probably to avoid catastrophic activation of the viral fusion activity in acidic Golgi compartment prior to virion release. prM-E cleavage is inefficient, and many virions are only partially matured. These uncleaved prM would play a role in immune evasion. In terms of biological role, may play a role in virus budding. Exerts cytotoxic effects by activating a mitochondrial apoptotic pathway through M ectodomain. May display a viroporin activity. Binds to host cell surface receptor and mediates fusion between viral and cellular membranes. Envelope protein is synthesized in the endoplasmic reticulum in the form of heterodimer with protein prM. They play a role in virion budding in the ER, and the newly formed immature particle is covered with 60 spikes composed of heterodimer between precursor prM and envelope protein E. The virion is transported to the Golgi apparatus where the low pH causes dissociation of PrM-E heterodimers and formation of E homodimers. prM-E cleavage is inefficient, and many virions are only partially matured. These uncleaved prM would play a role in immune evasion. Its function is as follows. Involved in immune evasion, pathogenesis and viral replication. Once cleaved off the polyprotein, is targeted to three destinations: the viral replication cycle, the plasma membrane and the extracellular compartment. Essential for viral replication. Required for formation of the replication complex and recruitment of other non-structural proteins to the ER-derived membrane structures. Excreted as a hexameric lipoparticle that plays a role against host immune response. Antagonizing the complement function. Binds to the host macrophages and dendritic cells. Inhibits signal transduction originating from Toll-like receptor 3 (TLR3). Functionally, component of the viral RNA replication complex that functions in virion assembly and antagonizes the host alpha/beta interferon antiviral response. In terms of biological role, required cofactor for the serine protease function of NS3. May have membrane-destabilizing activity and form viroporins. Displays three enzymatic activities: serine protease, NTPase and RNA helicase. NS3 serine protease, in association with NS2B, performs its autocleavage and cleaves the polyprotein at dibasic sites in the cytoplasm: C-prM, NS2A-NS2B, NS2B-NS3, NS3-NS4A, NS4A-2K and NS4B-NS5. NS3 RNA helicase binds RNA and unwinds dsRNA in the 3' to 5' direction. Its function is as follows. Regulates the ATPase activity of the NS3 helicase activity. NS4A allows NS3 helicase to conserve energy during unwinding. Functionally, functions as a signal peptide for NS4B and is required for the interferon antagonism activity of the latter. In terms of biological role, induces the formation of ER-derived membrane vesicles where the viral replication takes place. Inhibits interferon (IFN)-induced host STAT1 phosphorylation and nuclear translocation, thereby preventing the establishment of cellular antiviral state by blocking the IFN-alpha/beta pathway. Inhibits STAT2 translocation in the nucleus after IFN-alpha treatment. Replicates the viral (+) and (-) RNA genome, and performs the capping of genomes in the cytoplasm. NS5 methylates viral RNA cap at guanine N-7 and ribose 2'-O positions. Besides its role in RNA genome replication, also prevents the establishment of cellular antiviral state by blocking the interferon-alpha/beta (IFN-alpha/beta) signaling pathway. Inhibits host TYK2 and STAT2 phosphorylation, thereby preventing activation of JAK-STAT signaling pathway. The sequence is that of Genome polyprotein from Aedes sp. (Human).